Consider the following 243-residue polypeptide: Glutathione S-transferase omega-2 (243 aa).

Residues glycine 22–lysine 101 enclose the GST N-terminal domain. The active-site Nucleophile is the cysteine 32. Residues lysine 59, isoleucine 72, and glutamate 85–serine 86 contribute to the glutathione site. A GST C-terminal domain is found at aspartate 106–phenylalanine 231.

The protein belongs to the GST superfamily. Omega family. Expressed in a range of tissues, including the liver, kidney, skeletal muscle and prostate. Strongest expression in the testis.

The catalysed reaction is RX + glutathione = an S-substituted glutathione + a halide anion + H(+). The enzyme catalyses L-dehydroascorbate + 2 glutathione = glutathione disulfide + L-ascorbate. It carries out the reaction methylarsonate + 2 glutathione + H(+) = methylarsonous acid + glutathione disulfide + H2O. In terms of biological role, exhibits glutathione-dependent thiol transferase activity. Has high dehydroascorbate reductase activity and may contribute to the recycling of ascorbic acid. Participates in the biotransformation of inorganic arsenic and reduces monomethylarsonic acid (MMA). The polypeptide is Glutathione S-transferase omega-2 (GSTO2) (Homo sapiens (Human)).